The chain runs to 233 residues: Glutathione S-transferase U15 (233 aa).

A GST N-terminal domain is found at 5 to 85 (EEVKLLGTWY…YIDETWNSSG (81 aa)). Glutathione-binding positions include 15-16 (SP), 42-43 (SK), 56-57 (KV), and 69-70 (VS). The GST C-terminal domain occupies 92 to 219 (HPYDRALARF…VPDIDKVAKF (128 aa)). Thr-158 carries the post-translational modification Phosphothreonine.

Belongs to the GST superfamily. Tau family.

The protein resides in the cytoplasm. It localises to the cytosol. The enzyme catalyses RX + glutathione = an S-substituted glutathione + a halide anion + H(+). Functionally, may be involved in the conjugation of reduced glutathione to a wide number of exogenous and endogenous hydrophobic electrophiles and have a detoxification role against certain herbicides. This is Glutathione S-transferase U15 (GSTU15) from Arabidopsis thaliana (Mouse-ear cress).